The primary structure comprises 480 residues: Ftsk domain-containing protein YdcQ (480 aa).

Transmembrane regions (helical) follow at residues 25–45 (VKLA…FLFW) and 71–91 (SVLC…FLLF). Residues 217–399 (MKHISWQFDK…LGLMSDTGYG (183 aa)) enclose the FtsK domain. 234 to 241 (GGTGGGKT) lines the ATP pocket.

Its subcellular location is the cell membrane. This Bacillus subtilis (strain 168) protein is Ftsk domain-containing protein YdcQ (ydcQ).